Consider the following 636-residue polypeptide: Probable potassium transport system protein Kup (636 aa).

12 helical membrane-spanning segments follow: residues 23 to 43 (MALMLGALGVVYGDIGTSPLY), 57 to 77 (PAHVLGVLSILFWLLMIVVSL), 111 to 131 (WLLIVLGIFGAALFYGDSMIT), 148 to 168 (HTLEPWVVPVALVVLVALFAI), 179 to 199 (LFGPIMALWFATLAVLGGYQI), 217 to 237 (FIAEFPVMSFLLLGAVVLALT), 258 to 278 (WFAMVLPALTLCYFGQGALLL), 287 to 307 (PFFLMAPEWGLAALVGLATVA), 348 to 368 (IYLPQVNALLLCAVLVLVLLF), 377 to 397 (AYGFAVTGTMLTTSVLAFAVL), 409 to 429 (WMVLLGALLVIDILLFGANIF), and 431 to 451 (IHEGGWLPLLVGVVVFTLMMT).

It belongs to the HAK/KUP transporter (TC 2.A.72) family.

The protein resides in the cell inner membrane. It carries out the reaction K(+)(in) + H(+)(in) = K(+)(out) + H(+)(out). Functionally, transport of potassium into the cell. Likely operates as a K(+):H(+) symporter. In Bordetella bronchiseptica (strain ATCC BAA-588 / NCTC 13252 / RB50) (Alcaligenes bronchisepticus), this protein is Probable potassium transport system protein Kup.